The chain runs to 191 residues: Elongation factor P (191 aa).

This sequence belongs to the elongation factor P family.

The protein resides in the cytoplasm. Its pathway is protein biosynthesis; polypeptide chain elongation. Involved in peptide bond synthesis. Stimulates efficient translation and peptide-bond synthesis on native or reconstituted 70S ribosomes in vitro. Probably functions indirectly by altering the affinity of the ribosome for aminoacyl-tRNA, thus increasing their reactivity as acceptors for peptidyl transferase. This is Elongation factor P from Janthinobacterium sp. (strain Marseille) (Minibacterium massiliensis).